Consider the following 279-residue polypeptide: Putative phosphoenolpyruvate synthase regulatory protein (279 aa).

Gly-159 to Thr-166 provides a ligand contact to ADP.

Belongs to the pyruvate, phosphate/water dikinase regulatory protein family. PSRP subfamily.

The catalysed reaction is [pyruvate, water dikinase] + ADP = [pyruvate, water dikinase]-phosphate + AMP + H(+). It carries out the reaction [pyruvate, water dikinase]-phosphate + phosphate + H(+) = [pyruvate, water dikinase] + diphosphate. Bifunctional serine/threonine kinase and phosphorylase involved in the regulation of the phosphoenolpyruvate synthase (PEPS) by catalyzing its phosphorylation/dephosphorylation. The polypeptide is Putative phosphoenolpyruvate synthase regulatory protein (Ralstonia nicotianae (strain ATCC BAA-1114 / GMI1000) (Ralstonia solanacearum)).